The chain runs to 527 residues: GMP synthase [glutamine-hydrolyzing] (527 aa).

The Glutamine amidotransferase type-1 domain maps to 4-202 (KILILDFGSQ…VLQICGARAD (199 aa)). Cys81 serves as the catalytic Nucleophile. Active-site residues include His176 and Glu178. Residues 203 to 395 (WEMGNYIDEA…LGLPPAMVYR (193 aa)) enclose the GMPS ATP-PPase domain. An ATP-binding site is contributed by 230-236 (SGGVDSS).

As to quaternary structure, homodimer.

It carries out the reaction XMP + L-glutamine + ATP + H2O = GMP + L-glutamate + AMP + diphosphate + 2 H(+). It participates in purine metabolism; GMP biosynthesis; GMP from XMP (L-Gln route): step 1/1. In terms of biological role, catalyzes the synthesis of GMP from XMP. The sequence is that of GMP synthase [glutamine-hydrolyzing] from Paraburkholderia phytofirmans (strain DSM 17436 / LMG 22146 / PsJN) (Burkholderia phytofirmans).